The sequence spans 161 residues: Large ribosomal subunit protein uL10 (161 aa).

It belongs to the universal ribosomal protein uL10 family. Part of the ribosomal stalk of the 50S ribosomal subunit. The N-terminus interacts with L11 and the large rRNA to form the base of the stalk. The C-terminus forms an elongated spine to which L12 dimers bind in a sequential fashion forming a multimeric L10(L12)X complex.

In terms of biological role, forms part of the ribosomal stalk, playing a central role in the interaction of the ribosome with GTP-bound translation factors. In Sulfurovum sp. (strain NBC37-1), this protein is Large ribosomal subunit protein uL10.